The primary structure comprises 504 residues: Dihydrolipoamide dehydrogenase (504 aa).

The transit peptide at 1–34 (MLSQRLIGRTAVKSAFRPSGLPTVVNASRWRRGY) directs the protein to the mitochondrion. FAD contacts are provided by residues 69 to 78 (EKRGTLGGTC), lysine 87, glycine 151, and 180 to 182 (TGS). Cysteine 78 and cysteine 83 are joined by a disulfide. Residues 217 to 224 (GGGIIGLE), glutamate 240, valine 275, and glycine 310 contribute to the NAD(+) site. FAD is bound by residues aspartate 351 and 357-360 (MLAH). Residue histidine 483 is the Proton acceptor of the active site.

The protein belongs to the class-I pyridine nucleotide-disulfide oxidoreductase family. Eukaryotic pyruvate dehydrogenase (PDH) complexes are organized as a core consisting of the oligomeric dihydrolipoamide acetyl-transferase (E2), around which are arranged multiple copies of pyruvate dehydrogenase (E1), dihydrolipoamide dehydrogenase (E3) and protein X (E3BP) bound by non-covalent bonds. The Chaetomium thermophilum PDH complex contains 60 E2 units, 12 E3BP units, about 20 E1 units, and 12 or more E3 units. The units are organized in 1 E2 60-mer, 4 E3BP trimers, about 20 E1 tetramers, and a maximum of 12 E3 dimers. The E3BP trimers are bound inside the icosahedral core with tetrahedral symmetry. FAD serves as cofactor.

The protein localises to the mitochondrion. It carries out the reaction N(6)-[(R)-dihydrolipoyl]-L-lysyl-[protein] + NAD(+) = N(6)-[(R)-lipoyl]-L-lysyl-[protein] + NADH + H(+). Its function is as follows. Lipoamide dehydrogenase is a component of the alpha-ketoacid dehydrogenase complexes. This includes the pyruvate dehydrogenase complex, which catalyzes the overall conversion of pyruvate to acetyl-CoA and CO(2). Also acts as a component of the glycine cleavage system (glycine decarboxylase complex), which catalyzes the degradation of glycine. The 10-megadalton pyruvate dehydrogenase complex contains multiple copies of three enzymatic components: pyruvate dehydrogenase (E1), dihydrolipoamide acetyltransferase (E2) and lipoamide dehydrogenase (E3) and catalyzes the overall oxidative decarboxylation of pyruvate to form acetyl-CoA and CO(2). Within the complex, pyruvate and thiamine pyrophosphate (TPP or vitamin B1) are bound by pyruvate dehydrogenase E1 subunits alpha and beta and pyruvate is decarboxylated leading to the 2-carbon hydrohyethyl bound to TPP. The E2 component contains covalently-bound lipoyl cofactors and transfers the hydroxyethyl group from TPP to an oxidized form of covalently bound lipoamide, and the resulting acetyl group is then transferred to free coenzyme A to form acetyl-CoA and reduced dihydrolipoamide-E2. Finally, the flavoprotein dihydrolipoamide dehydrogenase (E3) re-oxidizes the lipoyl group of dihydrolipoamide-E2 to form lipoamide-E2 and NADH. A fourth subunit, E3BP, is responsible for tethering E3 in proximity to the core, forming the entire metabolon. The polypeptide is Dihydrolipoamide dehydrogenase (Chaetomium thermophilum (strain DSM 1495 / CBS 144.50 / IMI 039719) (Thermochaetoides thermophila)).